The sequence spans 345 residues: Dimethyladenosine transferase 1, mitochondrial (345 aa).

The transit peptide at 1–27 (MAASGKLGTFRLPPLPTIREIIKLFGL) directs the protein to the mitochondrion. Leucine 38, glycine 63, glutamate 85, lysine 86, aspartate 111, valine 112, and asparagine 141 together coordinate S-adenosyl-L-methionine.

The protein belongs to the class I-like SAM-binding methyltransferase superfamily. rRNA adenine N(6)-methyltransferase family. KsgA subfamily. Interacts with mitochondrial RNA polymerase POLRMT. Interacts with TFAM. Remains bound to the maturing mtSSU until the late stages of assembly. As to expression, ubiquitously expressed.

The protein resides in the mitochondrion. It catalyses the reaction adenosine(N)/adenosine(N+1) in rRNA + 4 S-adenosyl-L-methionine = N(6)-dimethyladenosine(N)/N(6)-dimethyladenosine(N+1) in rRNA + 4 S-adenosyl-L-homocysteine + 4 H(+). Mitochondrial methyltransferase which uses S-adenosyl methionine to dimethylate two highly conserved adjacent adenosine residues (A1006 and A1007) within the loop of helix 45 at the 3-prime end of 12S rRNA, thereby regulating the assembly or stability of the small subunit of the mitochondrial ribosome. Also required for basal transcription of mitochondrial DNA, probably via its interaction with POLRMT and TFAM. Stimulates transcription independently of the methyltransferase activity. The polypeptide is Dimethyladenosine transferase 1, mitochondrial (Tfb1m) (Mus musculus (Mouse)).